The following is a 177-amino-acid chain: Secretion monitor (177 aa).

The signal sequence occupies residues 1-37 (MIGILNRWRQFGRRYFWPHLLLGMVAASLGVPLNLSG).

Belongs to the SecM family.

Its subcellular location is the cytoplasm. The protein resides in the cytosol. The protein localises to the periplasm. In terms of biological role, regulates secA expression by translational coupling of the secM secA operon. Translational pausing at a specific Pro residue 5 residues before the end of the protein may allow disruption of a mRNA repressor helix that normally suppresses secA translation initiation. This chain is Secretion monitor, found in Yersinia pestis bv. Antiqua (strain Antiqua).